The sequence spans 159 residues: SsrA-binding protein (159 aa).

The tract at residues 133–159 (KKLHDKRETSKERDWNRQKNRLLKERG) is disordered. Basic and acidic residues predominate over residues 137 to 159 (DKRETSKERDWNRQKNRLLKERG).

The protein belongs to the SmpB family.

It is found in the cytoplasm. Required for rescue of stalled ribosomes mediated by trans-translation. Binds to transfer-messenger RNA (tmRNA), required for stable association of tmRNA with ribosomes. tmRNA and SmpB together mimic tRNA shape, replacing the anticodon stem-loop with SmpB. tmRNA is encoded by the ssrA gene; the 2 termini fold to resemble tRNA(Ala) and it encodes a 'tag peptide', a short internal open reading frame. During trans-translation Ala-aminoacylated tmRNA acts like a tRNA, entering the A-site of stalled ribosomes, displacing the stalled mRNA. The ribosome then switches to translate the ORF on the tmRNA; the nascent peptide is terminated with the 'tag peptide' encoded by the tmRNA and targeted for degradation. The ribosome is freed to recommence translation, which seems to be the essential function of trans-translation. In Sinorhizobium medicae (strain WSM419) (Ensifer medicae), this protein is SsrA-binding protein.